A 253-amino-acid chain; its full sequence is Zinc finger protein JAGGED (253 aa).

A disordered region spans residues 1–46; sequence MRHEENYLDLNNLPDDFSKDGNKQALEEGSSSGQRKKKGSKEGKDE. Over residues 16–26 the composition is skewed to basic and acidic residues; sequence DFSKDGNKQAL. The C2H2-type zinc finger occupies 51 to 73; the sequence is YECRFCSLKFCKSQALGGHMNRH.

As to quaternary structure, interacts with GATA18/HAN. In terms of tissue distribution, expressed in the emerging leaf, sepal, petal, stamen and carpel primordia. Not expressed in the apical shoot meristem (SAM).

It is found in the nucleus. In terms of biological role, controls the morphogenesis of lateral organs. Functions in lateral organ shape and is sufficient to induce proliferation and growth of lateral organ tissue. Is necessary and sufficient for bract formation, but its expression is excluded from the cryptic bract, which could be a cause of bractless flowers in Arabidopsis. Participates with FIL and YAB3 in regulating valve margin development. Functions with JGL to define stamen and carpel shape. Functions with AS1 and AS2 in the sepal and petal primordia to repress boundary-specifying genes for normal development of the organs. The protein is Zinc finger protein JAGGED (JAG) of Arabidopsis thaliana (Mouse-ear cress).